The primary structure comprises 419 residues: Gamma-glutamyl phosphate reductase (419 aa).

This sequence belongs to the gamma-glutamyl phosphate reductase family.

Its subcellular location is the cytoplasm. The enzyme catalyses L-glutamate 5-semialdehyde + phosphate + NADP(+) = L-glutamyl 5-phosphate + NADPH + H(+). It functions in the pathway amino-acid biosynthesis; L-proline biosynthesis; L-glutamate 5-semialdehyde from L-glutamate: step 2/2. Functionally, catalyzes the NADPH-dependent reduction of L-glutamate 5-phosphate into L-glutamate 5-semialdehyde and phosphate. The product spontaneously undergoes cyclization to form 1-pyrroline-5-carboxylate. The polypeptide is Gamma-glutamyl phosphate reductase (Yersinia pestis).